A 593-amino-acid polypeptide reads, in one-letter code: High affinity cGMP-specific 3',5'-cyclic phosphodiesterase 9A (593 aa).

Positions 87–142 (SAGVEDKRTTSRGQSAERPLRDRRVVGLEQPRREGAFESGQVEPRPREPQGCCQEG) are disordered. The span at 104-122 (RPLRDRRVVGLEQPRREGA) shows a compositional bias: basic and acidic residues. Residues 236-557 (PRRDVPTYPK…DRYEELKRID (322 aa)) form the PDEase domain. His312 functions as the Proton donor in the catalytic mechanism. A 3',5'-cyclic GMP-binding site is contributed by 312–316 (HNFRH). Positions 316, 352, and 353 each coordinate Zn(2+). Residue Asp353 participates in 3',5'-cyclic GMP binding. Asp353 contacts Mg(2+). Phosphoserine is present on Ser379. Residues Asp462, Tyr484, and 512 to 513 (AQ) contribute to the 3',5'-cyclic GMP site. Asp462 provides a ligand contact to Zn(2+). The disordered stretch occupies residues 564 to 593 (QKKTDSLTSGATEKSRERSRDVKNSEGDCA). A compositionally biased stretch (basic and acidic residues) spans 576–593 (EKSRERSRDVKNSEGDCA).

The protein belongs to the cyclic nucleotide phosphodiesterase family. PDE9 subfamily. As to quaternary structure, homodimer. It depends on Zn(2+) as a cofactor. Mg(2+) serves as cofactor.

It is found in the cell projection. The protein resides in the ruffle membrane. The protein localises to the cytoplasm. Its subcellular location is the perinuclear region. It localises to the golgi apparatus. It is found in the endoplasmic reticulum. The protein resides in the cell membrane. The protein localises to the sarcolemma. The catalysed reaction is 3',5'-cyclic GMP + H2O = GMP + H(+). It participates in purine metabolism; 3',5'-cyclic GMP degradation; GMP from 3',5'-cyclic GMP: step 1/1. Its activity is regulated as follows. Specifically inhibited by a compound named 3r ((R)-2-((1-cyclopentyl-4-hydroxy-1H-pyrazolo[3,4-d]pyrimidin-6- yl)amino)-N-(4-methoxyphenyl)propanamide); the inhibitor forms a hydrogen bond with Tyr-484, Ala-512 and Gln-513. Specifically hydrolyzes the second messenger cGMP, which is a key regulator of many important physiological processes. Highly specific: compared to other members of the cyclic nucleotide phosphodiesterase family, has the highest affinity and selectivity for cGMP. Specifically regulates natriuretic-peptide-dependent cGMP signaling in heart, acting as a regulator of cardiac hypertrophy in myocytes and muscle. Does not regulate nitric oxide-dependent cGMP in heart. Additional experiments are required to confirm whether its ability to hydrolyze natriuretic-peptide-dependent cGMP is specific to heart or is a general feature of the protein. In brain, involved in cognitive function, such as learning and long-term memory. The chain is High affinity cGMP-specific 3',5'-cyclic phosphodiesterase 9A (PDE9A) from Pan troglodytes (Chimpanzee).